The following is a 130-amino-acid chain: Small ribosomal subunit protein uS9 (130 aa).

The protein belongs to the universal ribosomal protein uS9 family.

The sequence is that of Small ribosomal subunit protein uS9 from Vibrio vulnificus (strain CMCP6).